Here is a 510-residue protein sequence, read N- to C-terminus: NAD(P)H-quinone oxidoreductase subunit 2 A, chloroplastic (510 aa).

The next 12 helical transmembrane spans lie at 31-51 (FIFP…IDLT), 59-79 (WFYF…LFRW), 99-119 (IFQF…VEYI), 124-144 (MAIT…MFLC), 149-169 (LITI…LSGY), 183-203 (YLLM…WLYG), 229-249 (ISIA…PAPF), 295-315 (WHLL…LLAI), 323-343 (MLAY…IVGD), 354-374 (YMLF…LFGL), 395-415 (ALSL…AGFF), and 418-438 (LYLF…IGLL).

This sequence belongs to the complex I subunit 2 family. In terms of assembly, NDH is composed of at least 16 different subunits, 5 of which are encoded in the nucleus.

It localises to the plastid. The protein localises to the chloroplast thylakoid membrane. It catalyses the reaction a plastoquinone + NADH + (n+1) H(+)(in) = a plastoquinol + NAD(+) + n H(+)(out). The catalysed reaction is a plastoquinone + NADPH + (n+1) H(+)(in) = a plastoquinol + NADP(+) + n H(+)(out). In terms of biological role, NDH shuttles electrons from NAD(P)H:plastoquinone, via FMN and iron-sulfur (Fe-S) centers, to quinones in the photosynthetic chain and possibly in a chloroplast respiratory chain. The immediate electron acceptor for the enzyme in this species is believed to be plastoquinone. Couples the redox reaction to proton translocation, and thus conserves the redox energy in a proton gradient. The protein is NAD(P)H-quinone oxidoreductase subunit 2 A, chloroplastic of Saccharum officinarum (Sugarcane).